A 475-amino-acid chain; its full sequence is Ribulose bisphosphate carboxylase large chain (475 aa).

The residue at position 14 (Lys-14) is an N6,N6,N6-trimethyllysine. Substrate-binding residues include Asn-123 and Thr-173. The active-site Proton acceptor is Lys-175. Lys-177 contacts substrate. Mg(2+) is bound by residues Lys-201, Asp-203, and Glu-204. Lys-201 bears the N6-carboxylysine mark. His-294 acts as the Proton acceptor in catalysis. Substrate-binding residues include Arg-295, His-327, and Ser-379.

Belongs to the RuBisCO large chain family. Type I subfamily. As to quaternary structure, heterohexadecamer of 8 large chains and 8 small chains; disulfide-linked. The disulfide link is formed within the large subunit homodimers. Mg(2+) serves as cofactor. In terms of processing, the disulfide bond which can form in the large chain dimeric partners within the hexadecamer appears to be associated with oxidative stress and protein turnover.

Its subcellular location is the plastid. The protein resides in the chloroplast. The enzyme catalyses 2 (2R)-3-phosphoglycerate + 2 H(+) = D-ribulose 1,5-bisphosphate + CO2 + H2O. The catalysed reaction is D-ribulose 1,5-bisphosphate + O2 = 2-phosphoglycolate + (2R)-3-phosphoglycerate + 2 H(+). RuBisCO catalyzes two reactions: the carboxylation of D-ribulose 1,5-bisphosphate, the primary event in carbon dioxide fixation, as well as the oxidative fragmentation of the pentose substrate in the photorespiration process. Both reactions occur simultaneously and in competition at the same active site. The polypeptide is Ribulose bisphosphate carboxylase large chain (Actinidia chinensis (Kiwi)).